Consider the following 188-residue polypeptide: Elongation factor P (188 aa).

It belongs to the elongation factor P family.

The protein localises to the cytoplasm. It participates in protein biosynthesis; polypeptide chain elongation. In terms of biological role, involved in peptide bond synthesis. Stimulates efficient translation and peptide-bond synthesis on native or reconstituted 70S ribosomes in vitro. Probably functions indirectly by altering the affinity of the ribosome for aminoacyl-tRNA, thus increasing their reactivity as acceptors for peptidyl transferase. The protein is Elongation factor P of Phenylobacterium zucineum (strain HLK1).